Consider the following 211-residue polypeptide: V-type ATP synthase subunit D (211 aa).

The protein belongs to the V-ATPase D subunit family.

Its function is as follows. Produces ATP from ADP in the presence of a proton gradient across the membrane. This chain is V-type ATP synthase subunit D, found in Enterococcus faecalis (strain ATCC 700802 / V583).